A 412-amino-acid polypeptide reads, in one-letter code: Gamma-glutamyl phosphate reductase (412 aa).

The protein belongs to the gamma-glutamyl phosphate reductase family.

It is found in the cytoplasm. The catalysed reaction is L-glutamate 5-semialdehyde + phosphate + NADP(+) = L-glutamyl 5-phosphate + NADPH + H(+). It participates in amino-acid biosynthesis; L-proline biosynthesis; L-glutamate 5-semialdehyde from L-glutamate: step 2/2. Functionally, catalyzes the NADPH-dependent reduction of L-glutamate 5-phosphate into L-glutamate 5-semialdehyde and phosphate. The product spontaneously undergoes cyclization to form 1-pyrroline-5-carboxylate. This Bartonella quintana (strain Toulouse) (Rochalimaea quintana) protein is Gamma-glutamyl phosphate reductase.